Here is a 182-residue protein sequence, read N- to C-terminus: Ribosome maturation factor RimM (182 aa).

A PRC barrel domain is found at E103–F182.

Belongs to the RimM family. In terms of assembly, binds ribosomal protein uS19.

Its subcellular location is the cytoplasm. Its function is as follows. An accessory protein needed during the final step in the assembly of 30S ribosomal subunit, possibly for assembly of the head region. Essential for efficient processing of 16S rRNA. May be needed both before and after RbfA during the maturation of 16S rRNA. It has affinity for free ribosomal 30S subunits but not for 70S ribosomes. In Yersinia pestis (strain Pestoides F), this protein is Ribosome maturation factor RimM.